A 374-amino-acid chain; its full sequence is Coiled-coil domain-containing protein 89 (374 aa).

The segment at 1–38 (MRAPMPQKEQAPRMDTSPPEERLEKQNEKLNNQEEEME) is disordered. T16 bears the Phosphothreonine mark. Positions 19 to 32 (PEERLEKQNEKLNN) are enriched in basic and acidic residues. The stretch at 19–350 (PEERLEKQNE…YDELRLQSEA (332 aa)) forms a coiled coil.

Belongs to the CCDC89 family. In terms of assembly, interacts with HEY1.

It is found in the cytoplasm. It localises to the nucleus. The chain is Coiled-coil domain-containing protein 89 (CCDC89) from Macaca fascicularis (Crab-eating macaque).